A 259-amino-acid chain; its full sequence is Ras-related protein Rab-34 (259 aa).

Methionine 1 carries the N-acetylmethionine modification. GTP contacts are provided by serine 62, valine 63, glycine 64, lysine 65, threonine 66, aspartate 78, tyrosine 81, and threonine 84. Threonine 66 contributes to the Mg(2+) binding site. Residues 71–89 carry the Switch 1 motif; sequence RFCKDTFDKNYKATIGVDF. Threonine 84 and aspartate 107 together coordinate Mg(2+). The short motif at 108–127 is the Switch 2 element; the sequence is TAGQERFKCIASTYYRGAQA. Positions 110, 167, 169, and 198 each coordinate GTP. Serine 241 and serine 244 each carry phosphoserine. S-geranylgeranyl cysteine attachment occurs at residues cysteine 257 and cysteine 258.

Belongs to the small GTPase superfamily. Rab family. In terms of assembly, interacts with RILP. The GTP-bound form interacts with REP15. Requires Mg(2+) as cofactor.

It is found in the cytoplasm. It localises to the golgi apparatus. The protein resides in the cytoplasmic vesicle. Its subcellular location is the phagosome. The protein localises to the phagosome membrane. It is found in the cell projection. It localises to the cilium. The protein resides in the cytoskeleton. Its subcellular location is the microtubule organizing center. The protein localises to the centrosome. It is found in the centriole. The catalysed reaction is GTP + H2O = GDP + phosphate + H(+). Regulated by guanine nucleotide exchange factors (GEFs) which promote the exchange of bound GDP for free GTP. Regulated by GTPase activating proteins (GAPs) which increase the GTP hydrolysis activity. Inhibited by GDP dissociation inhibitors (GDIs). Its function is as follows. The small GTPases Rab are key regulators of intracellular membrane trafficking, from the formation of transport vesicles to their fusion with membranes. Rabs cycle between an inactive GDP-bound form and an active GTP-bound form that is able to recruit to membranes different sets of downstream effectors directly responsible for vesicle formation, movement, tethering and fusion. RAB34 transports protein involved in the redistribution of lysosomes to the peri-Golgi region. Plays a role in the maturation of phagosomes that engulf pathogens, such as S.aureus and M.tuberculosis. Plays a role in the fusion of phagosomes with lysosomes. Involved in ciliogenesis. In particular, it is required for early steps of the intracellular cilium assembly pathway initiated by trafficking and docking of ciliary vesicles to the centrioles in the cytoplasm, followed by axoneme formation in the cytoplasm. After axoneme elongation, the centrioles migrate close to the cell surface so that ciliary vesicles can fuse with the plasma membrane to expose cilia to the extracellular space. It seems dispensable for ciliogenesis via the extracellular pathway where cilium assembly begins after migration and docking of the centriole to the plasma membrane. Also acts as a positive regulator of hedgehog signaling and regulates ciliary function. The polypeptide is Ras-related protein Rab-34 (Homo sapiens (Human)).